A 373-amino-acid polypeptide reads, in one-letter code: CXADR-like membrane protein (373 aa).

The signal sequence occupies residues Met-1 to Gly-18. Ig-like C2-type domains follow at residues Thr-19–Lys-127 and Pro-135–Thr-224. Over Thr-19 to Ala-235 the chain is Extracellular. Disulfide bonds link Cys-35-Cys-111 and Cys-153-Cys-208. Residues Asn-74 and Asn-197 are each glycosylated (N-linked (GlcNAc...) asparagine). A helical membrane pass occupies residues Gly-236–Ile-256. At Arg-257–Val-373 the chain is on the cytoplasmic side. Over residues Tyr-264–Lys-281 the composition is skewed to basic and acidic residues. The interval Tyr-264–Val-373 is disordered. Low complexity predominate over residues Ser-288 to Ser-314. Over residues Lys-355–Val-373 the composition is skewed to polar residues.

Predominantly expressed in epithelial cells within different tissues and in the white adipose tissue. Expressed at high levels in small intestine and placenta, at intermediate levels in the heart, skeletal muscle, colon, spleen, kidney and lung and at low levels in the liver and peripheral blood leukocytes. Highly abundant in the intestine during embryo and fetal development (at protein level).

The protein localises to the cell junction. Its subcellular location is the tight junction. It is found in the cell membrane. Its function is as follows. May be involved in the cell-cell adhesion. May play a role in adipocyte differentiation and development of obesity. Is required for normal small intestine development. The sequence is that of CXADR-like membrane protein (CLMP) from Homo sapiens (Human).